The following is a 507-amino-acid chain: Phosphoprotein (507 aa).

The interaction with N0 stretch occupies residues 1–48; that stretch reads MAEEQARHVKNGLECIRALKAEPIGSLAIEEAMAAWSEISDNPGQERA. Disordered stretches follow at residues 41–99, 134–163, 201–231, and 250–273; these read DNPG…PPRN, GLDG…TEGY, NNFP…IKKG, and GATQ…GNVP. Position 86 is a phosphoserine (S86). The segment covering 134-145 has biased composition (low complexity); it reads GLDGDSTLSGGD. Acidic residues predominate over residues 146–160; that stretch reads NESENSDVDIGEPDT. S151 is modified (phosphoserine). Low complexity predominate over residues 260–270; the sequence is SEPSGPGAPAG. The tract at residues 304 to 376 is multimerization; it reads GDYYDDELFS…LSSIMIAIPG (73 aa). Interaction with the L polymerase stretches follow at residues 361-377 and 396-410; these read STLE…IPGL and PIIG…AEVL. A x domain (XD) region spans residues 457–507; the sequence is GPASRSVIRSIIKSSRLEEDRKRYLMTLLDDIKGANDLAKFHQMLMKIIMK. The interaction with the nucleocapsid (N-RNA) stretch occupies residues 459-507; it reads ASRSVIRSIIKSSRLEEDRKRYLMTLLDDIKGANDLAKFHQMLMKIIMK.

This sequence belongs to the morbillivirus P protein family. In terms of assembly, homotetramer. Interacts (via multimerization domain and XD domain) with polymerase L; this interaction forms the polymerase L-P complex. Interacts (via N-terminus) with N0 (via Ncore); this interaction allows P to chaperon N0 to avoid N polymerization and non-specific RNA binding before encapsidation. Interacts (via C-terminus) with N-RNA template (via Ntail); this interaction maintains the P/L complex anchored to the nucleocapsid template during the sequential transcription. Interacts (via C-terminus) with protein C this interaction allows C to associate with the ribonucleocapsid. In terms of processing, phosphorylation on serines by host CK2 is necessary for the formation of viral factories.

In terms of biological role, essential cofactor of the RNA polymerase L that plays a central role in the transcription and replication by forming the polymerase complex with RNA polymerase L and recruiting L to the genomic N-RNA template for RNA synthesis. Also plays a central role in the encapsidation of nascent RNA chains by forming the encapsidation complex with the nucleocapsid protein N (N-P complex). Acts as a chaperone for newly synthesized free N protein, so-called N0, allowing encapsidation of nascent RNA chains during replication. The nucleoprotein protein N prevents excessive phosphorylation of P, which leads to down-regulation of viral transcription/ replication. Participates, together with N, in the formation of viral factories (viroplasms), which are large inclusions in the host cytoplasm where replication takes place. This chain is Phosphoprotein (P/V), found in Measles virus (strain Edmonston-AIK-C vaccine) (MeV).